The sequence spans 247 residues: Small ribosomal subunit protein eS6 (247 aa).

Residues 194-247 (ALKKKRVTKKREDHAEYTKLLAQRMKEAKERKMERKRSNSRSKGDSIRESTSKK) form a disordered region. A compositionally biased stretch (basic and acidic residues) spans 217-247 (RMKEAKERKMERKRSNSRSKGDSIRESTSKK).

The protein belongs to the eukaryotic ribosomal protein eS6 family. In terms of processing, ribosomal protein S6 is the major substrate of protein kinases in eukaryote ribosomes.

Component of the 40S small ribosomal subunit. Plays an important role in controlling cell growth and proliferation through the selective translation of particular classes of mRNA. The protein is Small ribosomal subunit protein eS6 (RPS6) of Aplysia californica (California sea hare).